Here is a 75-residue protein sequence, read N- to C-terminus: U9-theraphotoxin-Cg1a (75 aa).

The N-terminal stretch at 1-21 is a signal peptide; that stretch reads MKTLVLFIIFGLAALFLLSSA. The propeptide occupies 22-29; the sequence is NELEETER. Intrachain disulfides connect cysteine 31-cysteine 46, cysteine 38-cysteine 51, and cysteine 45-cysteine 58.

This sequence belongs to the neurotoxin 10 (Hwtx-1) family. 43 (Jztx-49) subfamily. In terms of tissue distribution, expressed by the venom gland.

The protein resides in the secreted. In terms of biological role, probable ion channel inhibitor. The protein is U9-theraphotoxin-Cg1a of Chilobrachys guangxiensis (Chinese earth tiger tarantula).